Consider the following 139-residue polypeptide: Ribonuclease VapC36 (139 aa).

Residues 1 to 127 (MIVDTSAVVA…GNDFPQTDLE (127 aa)) form the PINc domain. Mg(2+) is bound by residues D4 and D100.

This sequence belongs to the PINc/VapC protein family. Mg(2+) is required as a cofactor.

Its function is as follows. Toxic component of a type II toxin-antitoxin (TA) system. An RNase. Its cognate antitoxin is VapB36. The chain is Ribonuclease VapC36 from Mycobacterium tuberculosis (strain ATCC 25618 / H37Rv).